The chain runs to 606 residues: Mitogen-activated protein kinase kinase kinase 7 (606 aa).

Residues 1 to 300 (MSTASAASSS…FPGADEPLQY (300 aa)) are interaction with MAPK8IP1. The 256-residue stretch at 36–291 (IEVEEVVGRG…KIMTHLMRYF (256 aa)) folds into the Protein kinase domain. Residues 42–50 (VGRGAFGVV) and Lys63 contribute to the ATP site. Lys72 is covalently cross-linked (Glycyl lysine isopeptide (Lys-Gly) (interchain with G-Cter in ubiquitin)). Asp156 serves as the catalytic Proton acceptor. Lys158 participates in a covalent cross-link: Glycyl lysine isopeptide (Lys-Gly) (interchain with G-Cter in ubiquitin). A phosphothreonine; by autocatalysis mark is found at Thr184 and Thr187. A Phosphoserine; by autocatalysis modification is found at Ser192. Lys209 is covalently cross-linked (Glycyl lysine isopeptide (Lys-Gly) (interchain with G-Cter in ubiquitin)). Disordered regions lie at residues 301-338 (PCQY…MEQV) and 354-391 (KNQA…MSAD). A compositionally biased stretch (polar residues) spans 306–338 (DEGQSNSATSTGSFMDIASTNTSNKSDTNMEQV). Positions 361–375 (SESGRLSLGASRGSS) are enriched in low complexity. Phosphoserine is present on residues Ser367, Ser389, and Ser439. Residues 443 to 452 (LTVTGTEPGQ) are compositionally biased toward polar residues. The interval 443–493 (LTVTGTEPGQVSSRSSSPSVRMITTSGPTSEKPTRSHPWTPDDSTDTNGSD) is disordered. Low complexity predominate over residues 453–463 (VSSRSSSPSVR). Residue Ser455 is modified to Phosphoserine. Positions 464 to 473 (MITTSGPTSE) are enriched in polar residues.

The protein belongs to the protein kinase superfamily. STE Ser/Thr protein kinase family. MAP kinase kinase kinase subfamily. As to quaternary structure, can form homodimer. Binds both upstream activators and downstream substrates in multimolecular complexes. Interacts with TAB1/MAP3K7IP1, TAB2/MAP3K7IP2 and TAB3/MAP3K7IP3. Identified in the TRIKA2 complex composed of MAP3K7/TAK1, TAB1/MAP3K7IP1 and TAB2/MAP3K7IP2. Interacts with PPM1L and PPM1B/PP2CB. Interaction with PP2A and PPP6C leads to its repressed activity. Interacts with TRAF6 and TAB1/MAP3K7IP1; during IL-1 signaling. Interacts with TAOK1 and TAOK2; interaction with TAOK2 interferes with MAP3K7 interaction with IKKA, thus preventing NF-kappa-B activation. Interacts with DYNC2I2 (via WD domains). Interacts with CYLD and RBCK1. Interacts with TGFBR1; induces MAP3K7/TAK1 activation by TRAF6. Interacts with MAPK8IP1 and SMAD6. Interacts with isoform 1 of VRK2. Interacts with DAB2; the interaction is induced by TGF-beta stimulation and may mediate TGF-beta stimulated JNK activation. Interacts with TRIM5. Part of a complex containing ITCH, NDFIP1 and MAP3K7. Interacts with IFIT5; the interaction synergizes the recruitment of IKK to MAP3K7 and enhances IKK phosphorylation. Interacts with PLEKHM1 (via N- and C-terminus). Found in a complex with SH3RF1, RAC2, MAP2K7/MKK7, MAPK8IP1/JIP1, MAPK8/JNK1 and MAPK9/JNK2. Interacts with SASH1. Interacts with RIPK1. It depends on Mg(2+) as a cofactor. Post-translationally, association with TAB1/MAP3K7IP1 promotes autophosphorylation at Ser-192 and subsequent activation. Association with TAB2/MAP3K7IP2, itself associated with free unanchored Lys-63 polyubiquitin chain, promotes autophosphorylation and subsequent activation of MAP3K7. Dephosphorylation at Ser-192 by PPM1B/PP2CB and at Thr-187 by PP2A and PPP6C leads to inactivation. In terms of processing, 'Lys-48'-linked polyubiquitination at Lys-72 is induced by TNFalpha, and leads to proteasomal degradation. Undergoes 'Lys-48'-linked polyubiquitination catalyzed by ITCH. 'Lys-63'-linked polyubiquitination at Lys-158 by TRIM8 does not lead to proteasomal degradation but contributes to autophosphorylation and activation. Deubiquitinated by CYLD, a protease that selectively cleaves 'Lys-63'-linked ubiquitin chains. Deubiquitinated by USP19; leading to negative regulation of TNF-alpha- and IL-1beta-triggered NF-kappa-B activation.

The protein localises to the cytoplasm. It is found in the cell membrane. The catalysed reaction is L-seryl-[protein] + ATP = O-phospho-L-seryl-[protein] + ADP + H(+). It carries out the reaction L-threonyl-[protein] + ATP = O-phospho-L-threonyl-[protein] + ADP + H(+). With respect to regulation, activated by pro-inflammatory cytokines and in response to physical and chemical stresses, including osmotic stress, oxidative stress, arsenic and ultraviolet light irradiation. Activated by 'Lys-63'-linked polyubiquitination and by autophosphorylation. Association with TAB1/MAP3K7IP1 and TAB2/MAP3K7IP2 promotes activation through autophosphorylation, whereas PPM1B/PP2CB, PP2A and PPP6C dephosphorylation leads to inactivation. Ceramides are also able to activate MAP3K7/TAK1. Its function is as follows. Serine/threonine kinase which acts as an essential component of the MAP kinase signal transduction pathway. Plays an important role in the cascades of cellular responses evoked by changes in the environment. Mediates signal transduction of TRAF6, various cytokines including interleukin-1 (IL-1), transforming growth factor-beta (TGFB), TGFB-related factors like BMP2 and BMP4, toll-like receptors (TLR), tumor necrosis factor receptor CD40 and B-cell receptor (BCR). Once activated, acts as an upstream activator of the MKK/JNK signal transduction cascade and the p38 MAPK signal transduction cascade through the phosphorylation and activation of several MAP kinase kinases like MAP2K1/MEK1, MAP2K3/MKK3, MAP2K6/MKK6 and MAP2K7/MKK7. These MAP2Ks in turn activate p38 MAPKs and c-jun N-terminal kinases (JNKs); both p38 MAPK and JNK pathways control the transcription factors activator protein-1 (AP-1). Independently of MAP2Ks and p38 MAPKs, acts as a key activator of NF-kappa-B by promoting activation of the I-kappa-B-kinase (IKK) core complex. Mechanistically, recruited to polyubiquitin chains of RIPK2 and IKBKG/NEMO via TAB2/MAP3K7IP2 and TAB3/MAP3K7IP3, and catalyzes phosphorylation and activation of IKBKB/IKKB component of the IKK complex, leading to NF-kappa-B activation. In osmotic stress signaling, plays a major role in the activation of MAPK8/JNK1, but not that of NF-kappa-B. Promotes TRIM5 capsid-specific restriction activity. Phosphorylates RIPK1 at 'Ser-321' which positively regulates RIPK1 interaction with RIPK3 to promote necroptosis but negatively regulates RIPK1 kinase activity and its interaction with FADD to mediate apoptosis. Phosphorylates STING1 in response to cGAMP-activation, promoting association between STEEP1 and STING1 and STING1 translocation to COPII vesicles. This is Mitogen-activated protein kinase kinase kinase 7 (MAP3K7) from Pongo abelii (Sumatran orangutan).